Reading from the N-terminus, the 126-residue chain is MTCFKNEKGEVFRLHVNDPRIKTEKLVGVGNTVAATAKAAELEKAKPWYNKSATNPEAVKLIPNLYEWYVTKYDPDHYKRTGVAKWKSVNNITVNSKLFGRAFNEFKRGWIPDEKFYEVYNEICKN.

This is an uncharacterized protein from Escherichia coli (Bacteriophage T4).